Reading from the N-terminus, the 170-residue chain is MNTLQKGFTLIELMIVIAIVGILAAVALPAYQDYTARAQVSEAILLAEGQKSAVTEYYLNHGEWPSNNTSAGVASSTDIKGKYVQSVEVKNGVVTATMASSNVNNEIKGKKLSLWAKRQDGSVKWFCGQPVKRNDTATTNDDVKADTAANGKQIDTKHLPSTCRDAASAG.

The propeptide occupies 1 to 7 (MNTLQKG). Phe-8 is subject to N-methylphenylalanine. Residues 8–28 (FTLIELMIVIAIVGILAAVAL) traverse the membrane as a helical segment. An O-linked (Gal...) serine glycan is attached at Ser-70. Ser-100 carries the post-translational modification O-(sn-1-glycerophosphoryl)serine. A disulfide bridge connects residues Cys-127 and Cys-163.

The protein belongs to the N-Me-Phe pilin family. The pili are polar flexible filaments of about 5.4 nanometers diameter and 2.5 micrometers average length; they consist of only a single polypeptide chain arranged in a helical configuration of five subunits per turn in the assembled pilus. Post-translationally, O-linked glycan consists of GlcNAc-Gal disaccharide.

The protein localises to the fimbrium. Its subcellular location is the membrane. Functionally, major component of the type IV pilus (T4P) that plays a role in cellular adherence, microcolony formation as well as twitching motility. The protein is Fimbrial protein (pilE) of Neisseria meningitidis serogroup A / serotype 4A (strain DSM 15465 / Z2491).